A 652-amino-acid polypeptide reads, in one-letter code: DNA ligase (652 aa).

Residues 29 to 33 (DSEYD), 78 to 79 (SL), and E107 each bind NAD(+). K109 acts as the N6-AMP-lysine intermediate in catalysis. R130, E164, K278, and K302 together coordinate NAD(+). Zn(2+)-binding residues include C395, C398, C413, and C418. One can recognise a BRCT domain in the interval 577–652 (DRQAELFGLT…IEDEDWLLNL (76 aa)).

This sequence belongs to the NAD-dependent DNA ligase family. LigA subfamily. Mg(2+) serves as cofactor. Requires Mn(2+) as cofactor.

The enzyme catalyses NAD(+) + (deoxyribonucleotide)n-3'-hydroxyl + 5'-phospho-(deoxyribonucleotide)m = (deoxyribonucleotide)n+m + AMP + beta-nicotinamide D-nucleotide.. In terms of biological role, DNA ligase that catalyzes the formation of phosphodiester linkages between 5'-phosphoryl and 3'-hydroxyl groups in double-stranded DNA using NAD as a coenzyme and as the energy source for the reaction. It is essential for DNA replication and repair of damaged DNA. The chain is DNA ligase from Streptococcus equi subsp. zooepidemicus (strain MGCS10565).